Here is a 604-residue protein sequence, read N- to C-terminus: Elongation factor 4 (604 aa).

Residues 10–191 form the tr-type G domain; the sequence is KNIRNFSIIA…KIITTIPAPS (182 aa). GTP contacts are provided by residues 22–27 and 138–141; these read DHGKST and NKID.

It belongs to the TRAFAC class translation factor GTPase superfamily. Classic translation factor GTPase family. LepA subfamily.

The protein localises to the cell inner membrane. It catalyses the reaction GTP + H2O = GDP + phosphate + H(+). Its function is as follows. Required for accurate and efficient protein synthesis under certain stress conditions. May act as a fidelity factor of the translation reaction, by catalyzing a one-codon backward translocation of tRNAs on improperly translocated ribosomes. Back-translocation proceeds from a post-translocation (POST) complex to a pre-translocation (PRE) complex, thus giving elongation factor G a second chance to translocate the tRNAs correctly. Binds to ribosomes in a GTP-dependent manner. The chain is Elongation factor 4 from Helicobacter acinonychis (strain Sheeba).